A 256-amino-acid chain; its full sequence is Type III pantothenate kinase (256 aa).

Residue 6–13 (DVGNTNIV) participates in ATP binding. 107-110 (GADR) contributes to the substrate binding site. Asp-109 functions as the Proton acceptor in the catalytic mechanism. Residue Asp-129 coordinates K(+). Thr-132 contacts ATP. Residue Thr-184 participates in substrate binding.

This sequence belongs to the type III pantothenate kinase family. In terms of assembly, homodimer. It depends on NH4(+) as a cofactor. Requires K(+) as cofactor.

It localises to the cytoplasm. The enzyme catalyses (R)-pantothenate + ATP = (R)-4'-phosphopantothenate + ADP + H(+). It participates in cofactor biosynthesis; coenzyme A biosynthesis; CoA from (R)-pantothenate: step 1/5. Functionally, catalyzes the phosphorylation of pantothenate (Pan), the first step in CoA biosynthesis. This Pelotomaculum thermopropionicum (strain DSM 13744 / JCM 10971 / SI) protein is Type III pantothenate kinase.